The sequence spans 540 residues: Coatomer subunit delta (540 aa).

The interval 169–263 (RHEEMLRGKR…GMILGGKSGT (95 aa)) is disordered. Over residues 179 to 197 (SGGYTGISGGGGMGSGGMG) the composition is skewed to gly residues. Low complexity predominate over residues 212 to 229 (NNNNNNNNNNNNNNNNNN). The span at 238–250 (SPNTSRPSAASSG) shows a compositional bias: polar residues. Positions 251-261 (SQGGMILGGKS) are enriched in gly residues. The MHD domain maps to 304–540 (QEGVHITVEE…TLSVDTYEIK (237 aa)).

Belongs to the adaptor complexes medium subunit family. Delta-COP subfamily. In terms of assembly, oligomeric complex that consists of at least the alpha, beta, beta', gamma, delta, epsilon and zeta subunits.

The protein localises to the cytoplasm. It is found in the golgi apparatus membrane. The protein resides in the cytoplasmic vesicle. Its subcellular location is the COPI-coated vesicle membrane. Its function is as follows. The coatomer is a cytosolic protein complex that binds to dilysine motifs and reversibly associates with Golgi non-clathrin-coated vesicles, which further mediate biosynthetic protein transport from the ER, via the Golgi up to the trans Golgi network. Coatomer complex is required for budding from Golgi membranes, and is essential for the retrograde Golgi-to-ER transport of dilysine-tagged proteins. In Dictyostelium discoideum (Social amoeba), this protein is Coatomer subunit delta (copd).